Reading from the N-terminus, the 293-residue chain is Single-pass membrane and coiled-coil domain-containing protein 2 (293 aa).

The stretch at 116–188 forms a coiled coil; sequence KNLLEFLLKD…SAKLRMYQME (73 aa). The chain crosses the membrane as a helical span at residues 234 to 254; that stretch reads IFIMFYVLTVTGLLCYILFFG.

Its subcellular location is the membrane. The polypeptide is Single-pass membrane and coiled-coil domain-containing protein 2 (SMCO2) (Macaca fascicularis (Crab-eating macaque)).